A 429-amino-acid polypeptide reads, in one-letter code: Methanol:N,N-dimethyl-4-nitrosoaniline oxidoreductase (429 aa).

The protein belongs to the iron-containing alcohol dehydrogenase family. In terms of assembly, homodecamer. Mg(2+) serves as cofactor. It depends on Zn(2+) as a cofactor. The cofactor is NADPH.

It carries out the reaction methanol + A = formaldehyde + AH2. Inhibited by azide and hydrazine. Functionally, catalyzes the oxidation of methanol to yield formaldehyde. While the in vivo electron acceptor is not known, N,N-dimethyl-4-nitrosoaniline (NDMA) can serve this function in vitro and is reduced to 4-(hydroxylamino)-N,N-dimethylaniline. It can also use various other primary alcohols, polyols and formaldehyde. In addition, MNO is able to produce methylformate from methanol plus formaldehyde, and possesses a formaldehyde dismutase and a NADH-dependent formaldehyde reductase activity. The chain is Methanol:N,N-dimethyl-4-nitrosoaniline oxidoreductase (mno) from Amycolatopsis methanolica.